The sequence spans 248 residues: 1-(5-phosphoribosyl)-5-[(5-phosphoribosylamino)methylideneamino] imidazole-4-carboxamide isomerase (248 aa).

The active-site Proton acceptor is aspartate 8. Residue aspartate 130 is the Proton donor of the active site.

Belongs to the HisA/HisF family.

It is found in the cytoplasm. It catalyses the reaction 1-(5-phospho-beta-D-ribosyl)-5-[(5-phospho-beta-D-ribosylamino)methylideneamino]imidazole-4-carboxamide = 5-[(5-phospho-1-deoxy-D-ribulos-1-ylimino)methylamino]-1-(5-phospho-beta-D-ribosyl)imidazole-4-carboxamide. Its pathway is amino-acid biosynthesis; L-histidine biosynthesis; L-histidine from 5-phospho-alpha-D-ribose 1-diphosphate: step 4/9. In Alkalilimnicola ehrlichii (strain ATCC BAA-1101 / DSM 17681 / MLHE-1), this protein is 1-(5-phosphoribosyl)-5-[(5-phosphoribosylamino)methylideneamino] imidazole-4-carboxamide isomerase.